A 53-amino-acid chain; its full sequence is HOXB-AS3 peptide (53 aa).

The tract at residues 1 to 53 (MPVLPGTQRYPHQRRRFQAAGGGAESGKRGSEEAPGVAWSGSESGRDAATPAW) is disordered.

Interacts with HNRNPA1 (via the RGG-box). Interacts with IGF2BP2.

Blocks the binding of HNRNPA1 to the intronic sequences flanking exon 9 of the PKM gene by competitively binding to the HNRNPA1 RGG-box motif. This inhibits inclusion of exon 9 and promotes inclusion of exon 10, suppressing formation of the PKM M2 isoform and promoting production of the M1 isoform. Also suppresses HNRNPA1-mediated processing of microRNA 18a (miR-18a). Promotes MYC stability through interaction with IGF2BP2. This is HOXB-AS3 peptide from Homo sapiens (Human).